The chain runs to 526 residues: Serine/threonine-protein kinase ppk22 (526 aa).

Disordered stretches follow at residues 1 to 24 (MARE…QSHF) and 39 to 106 (AATV…PRPL). A compositionally biased stretch (polar residues) spans 10-23 (KSPSSTDDGMSQSH). Residues 65–78 (NQLNELDLNDSSDQ) show a composition bias toward low complexity. Residue Ser154 is modified to Phosphoserine. The 291-residue stretch at 155–445 (FEKIRLLGQG…ASDIKQHPFF (291 aa)) folds into the Protein kinase domain. ATP is bound by residues 161–169 (LGQGDVGKV) and Lys184. Catalysis depends on Asp280, which acts as the Proton acceptor. The residue at position 339 (Thr339) is a Phosphothreonine. A Phosphoserine modification is found at Ser341. A Phosphotyrosine modification is found at Tyr348. One can recognise an AGC-kinase C-terminal domain in the interval 446–526 (RHIQWALLRS…SVTLHHAGDE (81 aa)). The interval 499–526 (MHSSTPVNEQSNPFDSFSSVTLHHAGDE) is disordered. A compositionally biased stretch (polar residues) spans 500-519 (HSSTPVNEQSNPFDSFSSVT).

This sequence belongs to the protein kinase superfamily. AGC Ser/Thr protein kinase family.

The protein localises to the cytoplasm. It catalyses the reaction L-seryl-[protein] + ATP = O-phospho-L-seryl-[protein] + ADP + H(+). It carries out the reaction L-threonyl-[protein] + ATP = O-phospho-L-threonyl-[protein] + ADP + H(+). This Schizosaccharomyces pombe (strain 972 / ATCC 24843) (Fission yeast) protein is Serine/threonine-protein kinase ppk22 (ppk22).